The sequence spans 51 residues: MFRIEGLAPKLDPEEMKRKMREDVVSSIRNFLIYVALLRVTPYILKKLDSI.

An N-acetylmethionine modification is found at Met1. Lys10 participates in a covalent cross-link: Glycyl lysine isopeptide (Lys-Gly) (interchain with G-Cter in SUMO2). A helical membrane pass occupies residues 27 to 45 (SIRNFLIYVALLRVTPYIL).

The protein belongs to the Tom5 family. As to quaternary structure, forms part of the preprotein translocase complex of the outer mitochondrial membrane (TOM complex) which consists of at least 7 different proteins (TOMM5, TOMM6, TOMM7, TOMM20, TOMM22, TOMM40 and TOMM70).

The protein localises to the mitochondrion outer membrane. The sequence is that of Mitochondrial import receptor subunit TOM5 homolog from Mus musculus (Mouse).